Consider the following 161-residue polypeptide: MAKKKSKDKAGSNTIAMNKQARHEYFIDDEIEAGIELQGWEVKSLRSGKVNIAESYVYVRDGEIFISGMTITPLQAASTHVVANPTRIRKLLMSRKEIDNLIGRVNREGMTLVATTMYWVRSWAKIKVGVAKGKKLHDKRTDSKEKDWNRDKARIMKSSLR.

The interval 138-161 is disordered; that stretch reads DKRTDSKEKDWNRDKARIMKSSLR. The segment covering 139-154 has biased composition (basic and acidic residues); sequence KRTDSKEKDWNRDKAR.

Belongs to the SmpB family.

It is found in the cytoplasm. Required for rescue of stalled ribosomes mediated by trans-translation. Binds to transfer-messenger RNA (tmRNA), required for stable association of tmRNA with ribosomes. tmRNA and SmpB together mimic tRNA shape, replacing the anticodon stem-loop with SmpB. tmRNA is encoded by the ssrA gene; the 2 termini fold to resemble tRNA(Ala) and it encodes a 'tag peptide', a short internal open reading frame. During trans-translation Ala-aminoacylated tmRNA acts like a tRNA, entering the A-site of stalled ribosomes, displacing the stalled mRNA. The ribosome then switches to translate the ORF on the tmRNA; the nascent peptide is terminated with the 'tag peptide' encoded by the tmRNA and targeted for degradation. The ribosome is freed to recommence translation, which seems to be the essential function of trans-translation. This is SsrA-binding protein from Aliivibrio fischeri (strain MJ11) (Vibrio fischeri).